A 226-amino-acid polypeptide reads, in one-letter code: Lysosomal-associated transmembrane protein 4B (226 aa).

The next 4 membrane-spanning stretches (helical) occupy residues 26-46 (ILLGVWYLIINAVVLLILLSA), 72-92 (MCIAIAISLLMILICAMATYG), 100-120 (WIIPFFCYQIFDFALNTLVAI), and 153-173 (CLVLIILLFISIILTFKGYLI). Residues 205–221 (PPYDDATVNGAAKEPPP) form a required for NEDD4 interaction region.

It belongs to the LAPTM4/LAPTM5 transporter family. Homooligomer; upon reaching the lysosomes. Interacts with MCOLN1. Interacts with NEDD4; may play a role in the lysosomal sorting of LAPTM4B; enhances HGS association with NEDD4; mediates inhibition of EGFR degradation. Interacts with PIP5K1C; promotes SNX5 association with LAPTM4B; kinase activity of PIP5K1C is required; interaction is regulated by phosphatidylinositol 4,5-bisphosphate generated by PIP5K1C. Interacts with HGS; promotes HGS ubiquitination. Interacts with SNX5. Interacts with SLC3A2 and SLC7A5; recruits SLC3A2 and SLC7A5 to lysosomes to promote leucine uptake into these organelles and is required for mTORC1 activation. Interacts with LRRC32; decreases TGFB1 production in regulatory T cells. Interacts with BECN1; competes with EGFR for LAPTM4B binding; regulates EGFR activity. Interacts with EGFR; positively correlates with EGFR activation. In terms of processing, undergoes proteolytic cleavage following delivery to the lysosomes. Post-translationally, ubiquitinated by NEDD4.

The protein resides in the endomembrane system. The protein localises to the late endosome membrane. Its subcellular location is the cell membrane. It is found in the cell projection. It localises to the lysosome membrane. The protein resides in the endosome membrane. The protein localises to the endosome. Its subcellular location is the multivesicular body membrane. It is found in the multivesicular body lumen. Required for optimal lysosomal function. Blocks EGF-stimulated EGFR intraluminal sorting and degradation. Conversely by binding with the phosphatidylinositol 4,5-bisphosphate, regulates its PIP5K1C interaction, inhibits HGS ubiquitination and relieves LAPTM4B inhibition of EGFR degradation. Recruits SLC3A2 and SLC7A5 (the Leu transporter) to the lysosome, promoting entry of leucine and other essential amino acid (EAA) into the lysosome, stimulating activation of proton-transporting vacuolar (V)-ATPase protein pump (V-ATPase) and hence mTORC1 activation. Plays a role as negative regulator of TGFB1 production in regulatory T cells. Binds ceramide and facilitates its exit from late endosome in order to control cell death pathways. In Macaca fascicularis (Crab-eating macaque), this protein is Lysosomal-associated transmembrane protein 4B.